Reading from the N-terminus, the 340-residue chain is Sesquiterpene synthase 6 (340 aa).

Mg(2+)-binding residues include D90, N229, S233, and E237. Residues 90 to 94 (DDITD) carry the DDXXD motif motif. Positions 229 to 237 (NDIYSFNNE) match the NSE/DTE motif motif. 2 residues coordinate (2E,6E)-farnesyl diphosphate: R316 and Y317.

This sequence belongs to the terpene synthase family. Requires Mg(2+) as cofactor.

It carries out the reaction (2E,6E)-farnesyl diphosphate = delta-cadinene + diphosphate. The enzyme catalyses (2E,6E)-farnesyl diphosphate = bicyclogermacrene + diphosphate. Terpene cyclase that catalyzes the cyclization of farnesyl diphosphate (FPP) to various sesquiterpenes, including bicycloelemene, alpha-gurjunene, 9-epi-caryophylene, bicyclosesquiphellandrene, bicyclogermacrene and delta-cadinene. This is Sesquiterpene synthase 6 from Postia placenta (strain ATCC 44394 / Madison 698-R) (Brown rot fungus).